The sequence spans 395 residues: ADP-ribosylation factor-like protein 13A (395 aa).

GTP-binding positions include 28 to 35, 71 to 75, and 130 to 133; these read GLDNSGKS, DLTGD, and NKQD.

This sequence belongs to the small GTPase superfamily. Arf family.

This Rattus norvegicus (Rat) protein is ADP-ribosylation factor-like protein 13A (Arl13a).